The primary structure comprises 348 residues: MTAPSQVLKIRRPDDWHVHLRDGDMLKTVVPYTSEIYGRAIVMPNLASPITTVDAAIAYRQRILDAVPAGHDFTPLMTCYLTDSLDADELERGFHEGVFTAAKLYPANATTNSSHGVTSVDAIMPVLERMEKLGMPLLVHGEVTHADVDIFDREARFIDTVMEPLRQRLTTLKVVFEHITTKDAAQYVRDGNDYLAATITPQHLMFNRNDMLVGGIRPHLYCLPILKRNIHQQALRELVASGFTRAFLGTDSAPHSRHRKETSCGCAGCFNAPSALGSYAAVFEEMNALAHFEAFCSLNGPQFYGLPVNTGWVELVRDEQHVPENIALADDSLVPFLAGETVRWSVKK.

2 residues coordinate Zn(2+): H17 and H19. Residues 19-21 (HLR) and N45 contribute to the substrate site. Zn(2+) contacts are provided by K103, H140, and H178. K103 bears the N6-carboxylysine mark. Residue H140 coordinates substrate. L223 is a binding site for substrate. Residue D251 coordinates Zn(2+). The active site involves D251. Residues H255 and A267 each coordinate substrate.

This sequence belongs to the metallo-dependent hydrolases superfamily. DHOase family. Class II DHOase subfamily. Homodimer. It depends on Zn(2+) as a cofactor.

It carries out the reaction (S)-dihydroorotate + H2O = N-carbamoyl-L-aspartate + H(+). The protein operates within pyrimidine metabolism; UMP biosynthesis via de novo pathway; (S)-dihydroorotate from bicarbonate: step 3/3. In terms of biological role, catalyzes the reversible cyclization of carbamoyl aspartate to dihydroorotate. The protein is Dihydroorotase of Salmonella newport (strain SL254).